A 189-amino-acid chain; its full sequence is MTLQRPWTGVVLAGGRSSRMGQDKALLPWHGRPLLEQMQALLRQAGAQHVVVSGNRPEYAGIADVHPDLGPLGGLASVIANAADATTLVVVPVDMPLLSAALLGKLLAPSQHRCVAFEDQMLPMCLRLDASVREALTVLMAGAASSRSLRALQHSLQCHRVTVTASERAEFVNCNTPEQWSRLIHENPD.

Residues 12–14 (LAG), lysine 24, aspartate 68, and aspartate 94 each bind GTP. Aspartate 94 is a binding site for Mg(2+).

It belongs to the MobA family. As to quaternary structure, monomer. Mg(2+) is required as a cofactor.

The protein localises to the cytoplasm. It catalyses the reaction Mo-molybdopterin + GTP + H(+) = Mo-molybdopterin guanine dinucleotide + diphosphate. Functionally, transfers a GMP moiety from GTP to Mo-molybdopterin (Mo-MPT) cofactor (Moco or molybdenum cofactor) to form Mo-molybdopterin guanine dinucleotide (Mo-MGD) cofactor. This Xanthomonas euvesicatoria pv. vesicatoria (strain 85-10) (Xanthomonas campestris pv. vesicatoria) protein is Molybdenum cofactor guanylyltransferase.